The chain runs to 460 residues: Flavonol 3-O-glucosyltransferase (460 aa).

Catalysis depends on His-23, which acts as the Proton acceptor. An anthocyanidin contacts are provided by His-23 and Gln-88. Residue Asp-123 is the Charge relay of the active site. Thr-145 is a UDP-alpha-D-glucose binding site. His-154 provides a ligand contact to an anthocyanidin. Residues Ala-339, Gln-341, His-356, Trp-359, Asn-360, Ser-361, and Glu-364 each coordinate UDP-alpha-D-glucose. Gly-379 provides a ligand contact to an anthocyanidin. The UDP-alpha-D-glucose site is built by Asp-380 and Gln-381.

This sequence belongs to the UDP-glycosyltransferase family.

It carries out the reaction a flavonol + UDP-alpha-D-glucose = a flavonol 3-O-beta-D-glucoside + UDP + H(+). The catalysed reaction is quercetin + UDP-alpha-D-glucose = quercetin 3-O-beta-D-glucoside + UDP + H(+). The protein operates within flavonoid metabolism. Flavonol 3-O-glucosyltransferase that catalyzes the transfer of glucose from UDP-glucose to the 3-OH position of quercetin and kaempferol. Possesses high quercetin 3-O-glucosyltransferase activity in vitro. Catalyzes the glycosylation of anthocyanins from UDP-glucose. Also active in vitro on benzoates and benzoate derivatives. In Arabidopsis thaliana (Mouse-ear cress), this protein is Flavonol 3-O-glucosyltransferase.